Reading from the N-terminus, the 356-residue chain is Butyrate kinase (356 aa).

It belongs to the acetokinase family.

The protein localises to the cytoplasm. The catalysed reaction is butanoate + ATP = butanoyl phosphate + ADP. The protein operates within lipid metabolism; butanoate metabolism. Catalyzes the conversion of butyryl-CoA through butyryl phosphate to butyrate. The protein is Butyrate kinase of Clostridium tetani (strain Massachusetts / E88).